Here is a 397-residue protein sequence, read N- to C-terminus: Pectate lyase 2 (397 aa).

The signal sequence occupies residues M1–S25. Residue N37 is glycosylated (N-linked (GlcNAc...) asparagine). A disulfide bridge connects residues C54 and C71. 3 residues coordinate Ca(2+): D194, D218, and D222. R274 is a catalytic residue.

This sequence belongs to the polysaccharide lyase 1 family. Amb a subfamily. As to quaternary structure, monomer. The cofactor is Ca(2+). The N-terminus is blocked. In terms of tissue distribution, pollen and flowers.

The catalysed reaction is Eliminative cleavage of (1-&gt;4)-alpha-D-galacturonan to give oligosaccharides with 4-deoxy-alpha-D-galact-4-enuronosyl groups at their non-reducing ends.. It participates in glycan metabolism; pectin degradation; 2-dehydro-3-deoxy-D-gluconate from pectin: step 2/5. Functionally, has pectate lyase activity. This chain is Pectate lyase 2, found in Ambrosia artemisiifolia (Common ragweed).